Consider the following 211-residue polypeptide: MKKILISMIAIVLSITLAACGSNHAAKNHSDSNGTEQVSQDTHSNEYNQTEQKAGTPHSKNQKKLVNVTLDRAIDGDTIKVIYNGKKDTVRYLLVDTPETKKPNSCVQPYGEDASKRNKELVNSGKLQLEFDKGDRRDKYGRLLAYVYVDGKSVQETLLKEGLARVAYVYEPNTKYIDQFRLDEQEAKSDKLSIWSKSGYVTNRGFNGCVK.

The N-terminal stretch at 1 to 19 is a signal peptide; the sequence is MKKILISMIAIVLSITLAA. Cys20 carries N-palmitoyl cysteine lipidation. Residue Cys20 is the site of S-diacylglycerol cysteine attachment. The disordered stretch occupies residues 24 to 63; the sequence is HAAKNHSDSNGTEQVSQDTHSNEYNQTEQKAGTPHSKNQK. The segment covering 31-53 has biased composition (polar residues); it reads DSNGTEQVSQDTHSNEYNQTEQK. In terms of domain architecture, TNase-like spans 64-197; it reads KLVNVTLDRA…KSDKLSIWSK (134 aa). Asp77 lines the Ca(2+) pocket. Residue Arg91 is part of the active site. Residues Asp96 and Thr97 each contribute to the Ca(2+) site. Catalysis depends on residues Glu99 and Arg142.

This sequence belongs to the thermonuclease family. It depends on Ca(2+) as a cofactor.

It is found in the cell membrane. With respect to regulation, inhibited by aurintricalboxylic acid but not by Zn(2+). Shows DNase activity on double strand DNA. The protein is Endonuclease YncB (yncB) of Bacillus subtilis (strain 168).